The chain runs to 355 residues: Protein-glutamate methylesterase/protein-glutamine glutaminase 3 (355 aa).

A Response regulatory domain is found at 8–126 (RVLVVDDSPT…AEELRRWGKE (119 aa)). The residue at position 59 (D59) is a 4-aspartylphosphate. In terms of domain architecture, CheB-type methylesterase spans 152–337 (PPTGARVDIF…LASMPELILQ (186 aa)). Active-site residues include S166, H193, and D284.

This sequence belongs to the CheB family. Post-translationally, phosphorylated by CheA. Phosphorylation of the N-terminal regulatory domain activates the methylesterase activity.

The protein localises to the cytoplasm. It catalyses the reaction [protein]-L-glutamate 5-O-methyl ester + H2O = L-glutamyl-[protein] + methanol + H(+). It carries out the reaction L-glutaminyl-[protein] + H2O = L-glutamyl-[protein] + NH4(+). In terms of biological role, involved in chemotaxis. Part of a chemotaxis signal transduction system that modulates chemotaxis in response to various stimuli. Catalyzes the demethylation of specific methylglutamate residues introduced into the chemoreceptors (methyl-accepting chemotaxis proteins or MCP) by CheR. Also mediates the irreversible deamidation of specific glutamine residues to glutamic acid. This is Protein-glutamate methylesterase/protein-glutamine glutaminase 3 from Myxococcus xanthus (strain DK1622).